The primary structure comprises 309 residues: MNKLTIVGAGLVGEAAAQIIARDELCRELVLMDVQGELAQGKALDVWQAAVDSGSDTHVHGGAKAEMLEGSELVVITAGVPRKPGQSRQDVLSTNLPILDSIMADIKHHAPTATVLVVSNPVDVLTYRAWSVSGQGRDKVFGQAGVLDTARMKCFIAEQTGFSARDITALVLGGHGDSMVPLMRYCQIGSVPLSHFLSSEQIEQIVERTRKGGGEILGLKKTGSACDAPGVAIAQMVDAIGNGRNRILPAVAILEGEYGRTDIAMGVPCVLAEKGLARVIELPLDAQEQAMFDHSADQVARDIAEMKAL.

Residues 8-13 (GAGLVG) and aspartate 33 contribute to the NAD(+) site. Substrate is bound by residues arginine 82 and arginine 88. NAD(+)-binding positions include asparagine 95 and 118–120 (VSN). The substrate site is built by asparagine 120 and arginine 151. The active-site Proton acceptor is histidine 175.

The protein belongs to the LDH/MDH superfamily. MDH type 3 family.

The enzyme catalyses (S)-malate + NAD(+) = oxaloacetate + NADH + H(+). Its function is as follows. Catalyzes the reversible oxidation of malate to oxaloacetate. The polypeptide is Malate dehydrogenase (Pseudomonas putida (strain ATCC 700007 / DSM 6899 / JCM 31910 / BCRC 17059 / LMG 24140 / F1)).